We begin with the raw amino-acid sequence, 217 residues long: Zinc finger CCHC-type and RNA-binding motif-containing protein 1 (217 aa).

One can recognise an RRM domain in the interval 10 to 88 (STVYVSNLPF…RVIKASIAID (79 aa)). The CCHC-type zinc finger occupies 105–122 (SKCYECGESGHLSYACPK). The tract at residues 120–217 (CPKNMLGERE…YFSDEEELSD (98 aa)) is disordered. Positions 145 to 163 (PEEEIEEVEVSEEEGEDPA) are enriched in acidic residues. A phosphoserine mark is found at serine 155, serine 210, and serine 216.

As to quaternary structure, component of the U11/U12 snRNPs that are part of the U12-type spliceosome. Interacts with ZRSR1. As to expression, expressed at higher level in heart and testis, and at lower level in cerebellum. Weakly expressed at low level in liver.

It localises to the nucleus. The protein localises to the nucleoplasm. The chain is Zinc finger CCHC-type and RNA-binding motif-containing protein 1 (Zcrb1) from Mus musculus (Mouse).